Reading from the N-terminus, the 177-residue chain is Peptide methionine sulfoxide reductase MsrA 2 (177 aa).

Cys-12 is an active-site residue.

Belongs to the MsrA Met sulfoxide reductase family.

It catalyses the reaction L-methionyl-[protein] + [thioredoxin]-disulfide + H2O = L-methionyl-(S)-S-oxide-[protein] + [thioredoxin]-dithiol. The catalysed reaction is [thioredoxin]-disulfide + L-methionine + H2O = L-methionine (S)-S-oxide + [thioredoxin]-dithiol. In terms of biological role, has an important function as a repair enzyme for proteins that have been inactivated by oxidation. Catalyzes the reversible oxidation-reduction of methionine sulfoxide in proteins to methionine. The polypeptide is Peptide methionine sulfoxide reductase MsrA 2 (Staphylococcus aureus (strain MRSA252)).